Here is a 307-residue protein sequence, read N- to C-terminus: N-acetylglucosaminyl-diphospho-decaprenol L-rhamnosyltransferase (307 aa).

This sequence belongs to the glycosyltransferase 2 family. Mn(2+) serves as cofactor. It depends on Mg(2+) as a cofactor.

The catalysed reaction is N-acetyl-alpha-D-glucosaminyl-1-diphospho-trans,octa-cis-decaprenol + dTDP-beta-L-rhamnose = alpha-L-rhamnosyl-(1-&gt;3)-N-acetyl-alpha-D-glucosaminyl-diphospho-trans,octa-cis-decaprenol + dTDP + H(+). Functionally, involved in the biosynthesis of the mycolylarabinogalactan-peptidoglycan (mAGP) complex, an essential component of the mycobacterial cell wall. Catalyzes the transfer of the rhamnosyl moiety from dTDP-rhamnosyl (dTDP-Rha) onto the decaprenyl-pyrophosphoryl-GlcNAc (C50-PP-GlcNAc), yielding rhamnosyl-decaprenyl-pyrophosphoryl-GlcNAc (Rha-C50-PP-GlcNAc). This chain is N-acetylglucosaminyl-diphospho-decaprenol L-rhamnosyltransferase (wbbL), found in Mycobacterium tuberculosis (strain CDC 1551 / Oshkosh).